The chain runs to 483 residues: Protein nucleotidyltransferase YdiU (483 aa).

The ATP site is built by G100, G102, R103, K123, D135, G136, R189, and R196. D265 serves as the catalytic Proton acceptor. Positions 266 and 275 each coordinate Mg(2+). Position 275 (D275) interacts with ATP.

The protein belongs to the SELO family. Mg(2+) serves as cofactor. It depends on Mn(2+) as a cofactor.

It catalyses the reaction L-seryl-[protein] + ATP = 3-O-(5'-adenylyl)-L-seryl-[protein] + diphosphate. The catalysed reaction is L-threonyl-[protein] + ATP = 3-O-(5'-adenylyl)-L-threonyl-[protein] + diphosphate. It carries out the reaction L-tyrosyl-[protein] + ATP = O-(5'-adenylyl)-L-tyrosyl-[protein] + diphosphate. The enzyme catalyses L-histidyl-[protein] + UTP = N(tele)-(5'-uridylyl)-L-histidyl-[protein] + diphosphate. It catalyses the reaction L-seryl-[protein] + UTP = O-(5'-uridylyl)-L-seryl-[protein] + diphosphate. The catalysed reaction is L-tyrosyl-[protein] + UTP = O-(5'-uridylyl)-L-tyrosyl-[protein] + diphosphate. Functionally, nucleotidyltransferase involved in the post-translational modification of proteins. It can catalyze the addition of adenosine monophosphate (AMP) or uridine monophosphate (UMP) to a protein, resulting in modifications known as AMPylation and UMPylation. The polypeptide is Protein nucleotidyltransferase YdiU (Gloeobacter violaceus (strain ATCC 29082 / PCC 7421)).